The sequence spans 73 residues: Cytochrome b559 subunit alpha (73 aa).

A helical membrane pass occupies residues 21-35 (IIHSITVPSLFIAGW). A heme-binding site is contributed by His23.

Belongs to the PsbE/PsbF family. Heterodimer of an alpha subunit and a beta subunit. PSII is composed of 1 copy each of membrane proteins PsbA, PsbB, PsbC, PsbD, PsbE, PsbF, PsbH, PsbI, PsbJ, PsbK, PsbL, PsbM, PsbT, PsbY, PsbZ, Psb30/Ycf12, at least 3 peripheral proteins of the oxygen-evolving complex and a large number of cofactors. It forms dimeric complexes. Heme b serves as cofactor.

The protein localises to the plastid. It localises to the chloroplast thylakoid membrane. This b-type cytochrome is tightly associated with the reaction center of photosystem II (PSII). PSII is a light-driven water:plastoquinone oxidoreductase that uses light energy to abstract electrons from H(2)O, generating O(2) and a proton gradient subsequently used for ATP formation. It consists of a core antenna complex that captures photons, and an electron transfer chain that converts photonic excitation into a charge separation. This chain is Cytochrome b559 subunit alpha, found in Bigelowiella natans (Pedinomonas minutissima).